The following is a 317-amino-acid chain: Acetyl-coenzyme A carboxylase carboxyl transferase subunit alpha (317 aa).

In terms of domain architecture, CoA carboxyltransferase C-terminal spans 37–292 (EINKKLEQTK…ADYITKGYNE (256 aa)).

The protein belongs to the AccA family. Acetyl-CoA carboxylase is a heterohexamer composed of biotin carboxyl carrier protein (AccB), biotin carboxylase (AccC) and two subunits each of ACCase subunit alpha (AccA) and ACCase subunit beta (AccD).

It is found in the cytoplasm. The enzyme catalyses N(6)-carboxybiotinyl-L-lysyl-[protein] + acetyl-CoA = N(6)-biotinyl-L-lysyl-[protein] + malonyl-CoA. Its pathway is lipid metabolism; malonyl-CoA biosynthesis; malonyl-CoA from acetyl-CoA: step 1/1. Functionally, component of the acetyl coenzyme A carboxylase (ACC) complex. First, biotin carboxylase catalyzes the carboxylation of biotin on its carrier protein (BCCP) and then the CO(2) group is transferred by the carboxyltransferase to acetyl-CoA to form malonyl-CoA. In Flavobacterium johnsoniae (strain ATCC 17061 / DSM 2064 / JCM 8514 / BCRC 14874 / CCUG 350202 / NBRC 14942 / NCIMB 11054 / UW101) (Cytophaga johnsonae), this protein is Acetyl-coenzyme A carboxylase carboxyl transferase subunit alpha.